The following is a 491-amino-acid chain: Protein DETOXIFICATION 28 (491 aa).

Helical transmembrane passes span 47-67 (IVGPAIFTRVTTNLIFVITQA), 77-97 (LAAISIVNNVIIGFNYSLFIG), 127-147 (IVLFLFSILLLPMYIFATPIL), 160-180 (SGIISVWAIPTHFSFAFFFPI), 192-212 (VIAISSGVSLVVHIFVCWLFV), 228-248 (VSWWLNVFILFTYTTCGGCPL), 272-292 (GIMVCLENWYYRMLIVMTGNL), 302-322 (MSICMSINGLEMMVPLAFFAG), 352-372 (IIGIIISVLIYFLLDQIGWMF), 387-407 (ILLSFAILLNSVQPVLSGVAV), 414-434 (LVAFINLGCYYFIGLPLGIVM), and 444-464 (GIWAGMIFGGTMVQTLILIFI).

It belongs to the multi antimicrobial extrusion (MATE) (TC 2.A.66.1) family.

The protein localises to the membrane. The protein is Protein DETOXIFICATION 28 of Arabidopsis thaliana (Mouse-ear cress).